A 425-amino-acid chain; its full sequence is UDP-N-acetylglucosamine 1-carboxyvinyltransferase (425 aa).

22 to 23 is a binding site for phosphoenolpyruvate; it reads KN. Residue Arg98 participates in UDP-N-acetyl-alpha-D-glucosamine binding. Cys122 functions as the Proton donor in the catalytic mechanism. The residue at position 122 (Cys122) is a 2-(S-cysteinyl)pyruvic acid O-phosphothioketal. Residues 127-131, Asp313, and Ile335 contribute to the UDP-N-acetyl-alpha-D-glucosamine site; that span reads RPVDQ.

The protein belongs to the EPSP synthase family. MurA subfamily.

Its subcellular location is the cytoplasm. The enzyme catalyses phosphoenolpyruvate + UDP-N-acetyl-alpha-D-glucosamine = UDP-N-acetyl-3-O-(1-carboxyvinyl)-alpha-D-glucosamine + phosphate. It functions in the pathway cell wall biogenesis; peptidoglycan biosynthesis. Its function is as follows. Cell wall formation. Adds enolpyruvyl to UDP-N-acetylglucosamine. This Xylella fastidiosa (strain M12) protein is UDP-N-acetylglucosamine 1-carboxyvinyltransferase.